A 434-amino-acid chain; its full sequence is Monodehydroascorbate reductase, seedling isozyme (434 aa).

FAD-binding positions include 13–16, Glu-40, Arg-47, Lys-52, Ile-95, and 146–147; these read GGVA and RE. Residues 171–177, Glu-195, Arg-201, and Gly-260 contribute to the NAD(+) site; that span reads GGYIGLE. 173–177 contributes to the NADP(+) binding site; it reads YIGLE. Arg-201 and Gly-260 together coordinate NADP(+). Asp-297 contributes to the FAD binding site. 313 to 314 provides a ligand contact to NAD(+); that stretch reads EH. Position 313–314 (313–314) interacts with NADP(+); the sequence is EH. Val-315 provides a ligand contact to FAD. Arg-319 is an L-ascorbate binding site. Tyr-348 lines the FAD pocket. Tyr-348 serves as a coordination point for NAD(+). Tyr-348 is a binding site for NADP(+). Residue Arg-350 coordinates L-ascorbate.

Belongs to the FAD-dependent oxidoreductase family. FAD serves as cofactor.

The protein resides in the cytoplasm. The catalysed reaction is 2 monodehydro-L-ascorbate radical + NADH + H(+) = 2 L-ascorbate + NAD(+). Its function is as follows. Catalyzes the conversion of monodehydroascorbate to ascorbate, oxidizing NADH in the process. This Cucumis sativus (Cucumber) protein is Monodehydroascorbate reductase, seedling isozyme.